The following is a 310-amino-acid chain: Putative S-adenosyl-L-methionine-dependent methyltransferase MUL_2766 (310 aa).

S-adenosyl-L-methionine-binding positions include D131 and 160–161 (DL).

Belongs to the UPF0677 family.

Exhibits S-adenosyl-L-methionine-dependent methyltransferase activity. In Mycobacterium ulcerans (strain Agy99), this protein is Putative S-adenosyl-L-methionine-dependent methyltransferase MUL_2766.